The chain runs to 225 residues: Ribonuclease 3 (225 aa).

An RNase III domain is found at 4–127 (IEKLEQSLTY…IIGAIHLEAG (124 aa)). Glu-40 serves as a coordination point for Mg(2+). Asp-44 is an active-site residue. Residues Asp-113 and Glu-116 each coordinate Mg(2+). Glu-116 is a catalytic residue. The region spanning 154–223 (DYKTKLQEIT…AKIALEKLGS (70 aa)) is the DRBM domain.

The protein belongs to the ribonuclease III family. As to quaternary structure, homodimer. It depends on Mg(2+) as a cofactor.

The protein resides in the cytoplasm. The enzyme catalyses Endonucleolytic cleavage to 5'-phosphomonoester.. Its function is as follows. Digests double-stranded RNA. Involved in the processing of primary rRNA transcript to yield the immediate precursors to the large and small rRNAs (23S and 16S). Processes some mRNAs, and tRNAs when they are encoded in the rRNA operon. Processes pre-crRNA and tracrRNA of type II CRISPR loci if present in the organism. This is Ribonuclease 3 from Campylobacter jejuni subsp. doylei (strain ATCC BAA-1458 / RM4099 / 269.97).